Reading from the N-terminus, the 168-residue chain is Large ribosomal subunit protein uL11 (168 aa).

Belongs to the universal ribosomal protein uL11 family. In terms of assembly, part of the ribosomal stalk of the 50S ribosomal subunit. Interacts with L10 and the large rRNA to form the base of the stalk. L10 forms an elongated spine to which L12 dimers bind in a sequential fashion forming a multimeric L10(L12)X complex.

Its function is as follows. Forms part of the ribosomal stalk which helps the ribosome interact with GTP-bound translation factors. The polypeptide is Large ribosomal subunit protein uL11 (Metallosphaera sedula (strain ATCC 51363 / DSM 5348 / JCM 9185 / NBRC 15509 / TH2)).